We begin with the raw amino-acid sequence, 340 residues long: UDP-3-O-acylglucosamine N-acyltransferase (340 aa).

The active-site Proton acceptor is H238.

Belongs to the transferase hexapeptide repeat family. LpxD subfamily. In terms of assembly, homotrimer.

The catalysed reaction is a UDP-3-O-[(3R)-3-hydroxyacyl]-alpha-D-glucosamine + a (3R)-hydroxyacyl-[ACP] = a UDP-2-N,3-O-bis[(3R)-3-hydroxyacyl]-alpha-D-glucosamine + holo-[ACP] + H(+). Its pathway is bacterial outer membrane biogenesis; LPS lipid A biosynthesis. In terms of biological role, catalyzes the N-acylation of UDP-3-O-acylglucosamine using 3-hydroxyacyl-ACP as the acyl donor. Is involved in the biosynthesis of lipid A, a phosphorylated glycolipid that anchors the lipopolysaccharide to the outer membrane of the cell. The protein is UDP-3-O-acylglucosamine N-acyltransferase of Shewanella frigidimarina (strain NCIMB 400).